Reading from the N-terminus, the 400-residue chain is Tryptophan synthase beta chain (400 aa).

Lys-92 bears the N6-(pyridoxal phosphate)lysine mark.

Belongs to the TrpB family. As to quaternary structure, tetramer of two alpha and two beta chains. Pyridoxal 5'-phosphate is required as a cofactor.

The catalysed reaction is (1S,2R)-1-C-(indol-3-yl)glycerol 3-phosphate + L-serine = D-glyceraldehyde 3-phosphate + L-tryptophan + H2O. The protein operates within amino-acid biosynthesis; L-tryptophan biosynthesis; L-tryptophan from chorismate: step 5/5. The beta subunit is responsible for the synthesis of L-tryptophan from indole and L-serine. The chain is Tryptophan synthase beta chain from Neisseria meningitidis serogroup B (strain ATCC BAA-335 / MC58).